Here is a 557-residue protein sequence, read N- to C-terminus: Aerobic glycerol-3-phosphate dehydrogenase (557 aa).

21-49 (DLVIIGGGITGAGIALDASERGMKVALVE) contacts FAD.

This sequence belongs to the FAD-dependent glycerol-3-phosphate dehydrogenase family. Requires FAD as cofactor.

The protein resides in the cytoplasm. The catalysed reaction is a quinone + sn-glycerol 3-phosphate = dihydroxyacetone phosphate + a quinol. Its pathway is polyol metabolism; glycerol degradation via glycerol kinase pathway; glycerone phosphate from sn-glycerol 3-phosphate (aerobic route): step 1/1. This is Aerobic glycerol-3-phosphate dehydrogenase (glpD) from Staphylococcus aureus (strain USA300).